A 193-amino-acid chain; its full sequence is Ion-translocating oxidoreductase complex subunit A (193 aa).

The next 6 helical transmembrane spans lie at leucine 5 to leucine 25, phenylalanine 47 to leucine 67, leucine 72 to valine 92, leucine 102 to leucine 122, alanine 134 to isoleucine 154, and alanine 171 to valine 191.

It belongs to the NqrDE/RnfAE family. In terms of assembly, the complex is composed of six subunits: RsxA, RsxB, RsxC, RsxD, RsxE and RsxG.

Its subcellular location is the cell inner membrane. In terms of biological role, part of a membrane-bound complex that couples electron transfer with translocation of ions across the membrane. Required to maintain the reduced state of SoxR. This chain is Ion-translocating oxidoreductase complex subunit A, found in Salmonella agona (strain SL483).